Reading from the N-terminus, the 617-residue chain is Probable Xaa-Pro aminopeptidase P (617 aa).

4 residues coordinate Mn(2+): Asp-414, Asp-425, Glu-523, and Glu-537.

It belongs to the peptidase M24B family. It depends on Mn(2+) as a cofactor.

It carries out the reaction Release of any N-terminal amino acid, including proline, that is linked to proline, even from a dipeptide or tripeptide.. In terms of biological role, catalyzes the removal of a penultimate prolyl residue from the N-termini of peptides. The sequence is that of Probable Xaa-Pro aminopeptidase P (AMPP) from Blastomyces gilchristii (strain SLH14081) (Blastomyces dermatitidis).